A 140-amino-acid polypeptide reads, in one-letter code: Profilin (140 aa).

Serine 2 bears the N-acetylserine mark.

The protein belongs to the profilin family. In terms of assembly, occurs in many kinds of cells as a complex with monomeric actin in a 1:1 ratio.

The protein localises to the cytoplasm. Its subcellular location is the cytoskeleton. Functionally, binds to actin and affects the structure of the cytoskeleton. At high concentrations, profilin prevents the polymerization of actin, whereas it enhances it at low concentrations. By binding to PIP2, it inhibits the formation of IP3 and DG. The sequence is that of Profilin from Clypeaster japonicus (Sand dollar).